The following is a 469-amino-acid chain: Acetyl-CoA decarbonylase/synthase complex subunit beta 1 (469 aa).

Cys-189, Cys-192, Cys-278, and Cys-280 together coordinate [Ni-Fe-S] cluster.

Belongs to the CdhC family. In terms of assembly, monomer. The ACDS complex is made up of alpha, epsilon, beta, gamma and delta chains with a probable stoichiometry of (alpha(2)epsilon(2))(4)-beta(8)-(gamma(1)delta(1))(8) (Potential). It depends on [Ni-Fe-S] cluster as a cofactor.

The enzyme catalyses Co(I)-[corrinoid Fe-S protein] + acetyl-CoA + H(+) = methyl-Co(III)-[corrinoid Fe-S protein] + CO + CoA. The protein operates within one-carbon metabolism; methanogenesis from acetate. In terms of biological role, part of a complex that catalyzes the reversible cleavage of acetyl-CoA, allowing growth on acetate as sole source of carbon and energy. The alpha-epsilon complex generates CO from CO(2), while the beta subunit (this protein) combines the CO with CoA and a methyl group to form acetyl-CoA. The methyl group, which is incorporated into acetyl-CoA, is transferred to the beta subunit by a corrinoid iron-sulfur protein (the gamma-delta complex). This Methanosarcina mazei (strain ATCC BAA-159 / DSM 3647 / Goe1 / Go1 / JCM 11833 / OCM 88) (Methanosarcina frisia) protein is Acetyl-CoA decarbonylase/synthase complex subunit beta 1 (cdhC1).